The primary structure comprises 381 residues: MSGQDKASQRVLCAMSGGVDSSVTAALLKDAGYQVIGAMMRFWPDDKRVDTFDTCCSPDAAYEARRVAEQVGVPFYLLDYREQFQHHIVGPFLSEYAQGRTPNPCVNCNTKVKFDELVKKAKMLGCRYVATGHYVKRVEREDGSVEFHRGDDPRKDQTYFLWGTPREALPFILFPVGELEKPRVREIAAEKGLLTARKPESQNICFVPGKVQDFVAEHLPQRQGLIREIRTGEVVGEHLGTQFYTLGQKKGLGLYQTHRVRHVVHLDPETNTVWVGDYEDCLWTGLKAEGANYLLDLAELPREVEVQVRYRTKPVRATVLHADEHGFELQFEEPQFAVAPGQSAVLYAGTRLLGGGLIADHARNLPVVPADQAAQPVPVSG.

ATP-binding positions include 14–21 (AMSGGVDS) and M40. C108 functions as the Nucleophile in the catalytic mechanism. A disulfide bridge links C108 with C205. G132 serves as a coordination point for ATP. The interval 155–157 (KDQ) is interaction with tRNA. The Cysteine persulfide intermediate role is filled by C205. The interval 309–310 (RY) is interaction with tRNA.

Belongs to the MnmA/TRMU family.

The protein resides in the cytoplasm. It carries out the reaction S-sulfanyl-L-cysteinyl-[protein] + uridine(34) in tRNA + AH2 + ATP = 2-thiouridine(34) in tRNA + L-cysteinyl-[protein] + A + AMP + diphosphate + H(+). Catalyzes the 2-thiolation of uridine at the wobble position (U34) of tRNA, leading to the formation of s(2)U34. The polypeptide is tRNA-specific 2-thiouridylase MnmA (Deinococcus geothermalis (strain DSM 11300 / CIP 105573 / AG-3a)).